Consider the following 255-residue polypeptide: Acetylglutamate kinase (255 aa).

Substrate contacts are provided by residues 40–41 (GG), R62, and N153.

The protein belongs to the acetylglutamate kinase family. ArgB subfamily.

The protein localises to the cytoplasm. The catalysed reaction is N-acetyl-L-glutamate + ATP = N-acetyl-L-glutamyl 5-phosphate + ADP. It participates in amino-acid biosynthesis; L-arginine biosynthesis; N(2)-acetyl-L-ornithine from L-glutamate: step 2/4. Its function is as follows. Catalyzes the ATP-dependent phosphorylation of N-acetyl-L-glutamate. The chain is Acetylglutamate kinase from Bacillus cereus (strain ZK / E33L).